Here is a 328-residue protein sequence, read N- to C-terminus: Carbonic anhydrase-related protein 11 (328 aa).

Residues Met-1–Ala-23 form the signal peptide. Residues Asp-33–Arg-303 form the Alpha-carbonic anhydrase domain. N-linked (GlcNAc...) asparagine glycans are attached at residues Asn-118, Asn-170, and Asn-260. Positions Leu-299–Arg-328 are disordered. The span at Leu-319 to Arg-328 shows a compositional bias: basic and acidic residues.

It belongs to the alpha-carbonic anhydrase family. Expressed abundantly in the brain with moderate expression also present in spinal cord and thyroid.

It localises to the secreted. In terms of biological role, does not have a catalytic activity. The sequence is that of Carbonic anhydrase-related protein 11 (CA11) from Homo sapiens (Human).